The chain runs to 73 residues: Gas vesicle protein A (73 aa).

The protein belongs to the gas vesicle GvpA family. As to quaternary structure, the gas vesicle shell is 2 nm thick and consists of a single layer of this protein. It forms helical ribs nearly perpendicular to the long axis of the vesicle.

It is found in the gas vesicle shell. In terms of biological role, gas vesicles are hollow, gas filled proteinaceous nanostructures found in some microorganisms. During planktonic growth they allow positioning of the organism at a favorable depth for light or nutrient acquisition. GvpA forms the protein shell. The chain is Gas vesicle protein A from Nostoc punctiforme (strain ATCC 29133 / PCC 73102).